Reading from the N-terminus, the 479-residue chain is GDP-fucose protein O-fucosyltransferase 3 (479 aa).

Over 1–8 (MVRIQRRK) the chain is Cytoplasmic. The chain crosses the membrane as a helical; Signal-anchor for type II membrane protein span at residues 9–31 (LLASCLCVTATVFLLVTLQVMVE). The Lumenal portion of the chain corresponds to 32–479 (LGKFERKEFK…QEFWGLVFKD (448 aa)). N-linked (GlcNAc...) asparagine glycans are attached at residues asparagine 110 and asparagine 168. Cysteine 389 and cysteine 392 are joined by a disulfide.

This sequence belongs to the glycosyltransferase 10 family. As to expression, expressed in lung, digestive tract, gall bladder, placenta, kidney, uterus and brain. Not detected in spleen, heart, muscle, liver and pancreas.

It is found in the endoplasmic reticulum membrane. The protein resides in the golgi apparatus membrane. It localises to the golgi apparatus. The protein localises to the lysosome. The enzyme catalyses L-threonyl-[protein] + GDP-beta-L-fucose = 3-O-(alpha-L-fucosyl)-L-threonyl-[protein] + GDP + H(+). The catalysed reaction is L-seryl-[protein] + GDP-beta-L-fucose = 3-O-(alpha-L-fucosyl)-L-seryl-[protein] + GDP + H(+). The protein operates within protein modification; protein glycosylation. Its function is as follows. Protein O-fucosyltransferase that specifically catalyzes O-fucosylation of serine or threonine residues in EMI domains of target proteins, such as MMRN1, MMRN2 and EMID1. Attaches fucose through an O-glycosidic linkage. O-fucosylation of EMI domain-containing proteins may be required for facilitating protein folding and secretion. May also show alpha-(1,3)-fucosyltransferase activity toward the innermost N-acetyl glucosamine (GlcNAc) residue in biantennary N-glycan acceptors. However, this was tested with a library of synthetic substrates and this activity is unsure in vivo. May be involved in biosynthesis of Lewis X-carrying biantennary N-glycans that regulate neuron stem cell self-renewal during brain development. The sequence is that of GDP-fucose protein O-fucosyltransferase 3 from Homo sapiens (Human).